The chain runs to 225 residues: Putative ankyrin repeat protein RBE_1025 (225 aa).

ANK repeat units follow at residues 6–35 (LSKD…AINP), 41–71 (NGKT…NVNI), 75–120 (TGFT…DVNI), and 124–153 (KGNT…SPFI).

This Rickettsia bellii (strain RML369-C) protein is Putative ankyrin repeat protein RBE_1025.